We begin with the raw amino-acid sequence, 346 residues long: Tyrosine--tRNA ligase (346 aa).

Residues 47–56 (PSGRIHIAQA) carry the 'HIGH' region motif. Residues 230 to 234 (KMSKS) carry the 'KMSKS' region motif. Residue lysine 233 coordinates ATP.

It belongs to the class-I aminoacyl-tRNA synthetase family. As to quaternary structure, homodimer.

The catalysed reaction is tRNA(Tyr) + L-tyrosine + ATP = L-tyrosyl-tRNA(Tyr) + AMP + diphosphate + H(+). Functionally, catalyzes the attachment of tyrosine to tRNA(Tyr) in a two-step reaction: tyrosine is first activated by ATP to form Tyr-AMP and then transferred to the acceptor end of tRNA(Tyr). The polypeptide is Tyrosine--tRNA ligase (YARS) (Acanthamoeba polyphaga (Amoeba)).